We begin with the raw amino-acid sequence, 123 residues long: Small ribosomal subunit protein uS12c (123 aa).

The span at 1-16 (MPTIQQLIRNSRQPAE) shows a compositional bias: polar residues. The interval 1 to 23 (MPTIQQLIRNSRQPAENRTKSPA) is disordered.

Belongs to the universal ribosomal protein uS12 family. Part of the 30S ribosomal subunit.

The protein resides in the plastid. The protein localises to the chloroplast. In terms of biological role, with S4 and S5 plays an important role in translational accuracy. Located at the interface of the 30S and 50S subunits. This Staurastrum punctulatum (Green alga) protein is Small ribosomal subunit protein uS12c (rps12).